The following is a 475-amino-acid chain: Ribulose bisphosphate carboxylase large chain (475 aa).

The propeptide occupies 1–2 (MS). N-acetylproline is present on proline 3. The residue at position 14 (lysine 14) is an N6,N6,N6-trimethyllysine. Substrate is bound by residues asparagine 123 and threonine 173. The active-site Proton acceptor is the lysine 175. Lysine 177 serves as a coordination point for substrate. Mg(2+) contacts are provided by lysine 201, aspartate 203, and glutamate 204. Position 201 is an N6-carboxylysine (lysine 201). The Proton acceptor role is filled by histidine 294. Substrate is bound by residues arginine 295, histidine 327, and serine 379.

It belongs to the RuBisCO large chain family. Type I subfamily. As to quaternary structure, heterohexadecamer of 8 large chains and 8 small chains; disulfide-linked. The disulfide link is formed within the large subunit homodimers. Mg(2+) is required as a cofactor. Post-translationally, the disulfide bond which can form in the large chain dimeric partners within the hexadecamer appears to be associated with oxidative stress and protein turnover.

Its subcellular location is the plastid. It is found in the chloroplast. The enzyme catalyses 2 (2R)-3-phosphoglycerate + 2 H(+) = D-ribulose 1,5-bisphosphate + CO2 + H2O. The catalysed reaction is D-ribulose 1,5-bisphosphate + O2 = 2-phosphoglycolate + (2R)-3-phosphoglycerate + 2 H(+). Functionally, ruBisCO catalyzes two reactions: the carboxylation of D-ribulose 1,5-bisphosphate, the primary event in carbon dioxide fixation, as well as the oxidative fragmentation of the pentose substrate in the photorespiration process. Both reactions occur simultaneously and in competition at the same active site. This Pinus koraiensis (Korean pine) protein is Ribulose bisphosphate carboxylase large chain.